The primary structure comprises 122 residues: Ferredoxin (122 aa).

Residues 1–33 (MSHDRRLTVGSLLPNQPRPVAVPKAPSVVQPSK) are disordered. Positions 8 to 14 (TVGSLLP) are targeting peptide. Residues 40–122 (AIIRLEQNGR…FRLACQANME (83 aa)) enclose the 2Fe-2S ferredoxin-type domain. 4 residues coordinate [2Fe-2S] cluster: Cys75, Cys80, Cys83, and Cys117.

Belongs to the 2Fe2S plant-type ferredoxin family. The cofactor is [2Fe-2S] cluster.

The protein localises to the encapsulin nanocompartment. Cargo protein of a type 1 encapsulin nanocompartment. An iron-binding protein probably involved in iron mineralization in the encapsulin nanocompartment. 2 different cargo proteins have been identified (IMEF and Fer); when both are expressed in E.coli with the shell protein only IMEF is detected within the nanocompartment. E.coli expressing all 3 genes stores the largest amount of iron and is protected from Fe/H2O2-induced oxidative stress. The chain is Ferredoxin from Bacillus thermotolerans (Quasibacillus thermotolerans).